We begin with the raw amino-acid sequence, 197 residues long: uncharacterized protein (197 aa).

Positions 1 to 23 (MSARAPKELRLALPPCLLNRTFA) are cleaved as a signal peptide. Residues Asn19 and Asn26 are each glycosylated (N-linked (GlcNAc...) asparagine). The Extracellular segment spans residues 24–61 (SPNASGSGNTGARGPGAGGSGTCITQVGQQLFQSFSST). The chain crosses the membrane as a helical span at residues 62–82 (LVLIVLVTLIFCLIVLSLSTF). The Cytoplasmic segment spans residues 83 to 197 (HIHKRRMKKR…EGLLQTVVLS (115 aa)). A disordered region spans residues 94 to 179 (MQRAQEEYER…ASSPQGAHAV (86 aa)). 2 stretches are compositionally biased toward basic and acidic residues: residues 96-107 (RAQEEYERDHCS) and 125-136 (HAKETRLERQPR). Residues 147–161 (SSSSSSSPGLPCQGP) show a composition bias toward low complexity. Pro residues predominate over residues 162-171 (CAPPPPPPAS).

It is found in the membrane. This is an uncharacterized protein from Pongo abelii (Sumatran orangutan).